Here is a 196-residue protein sequence, read N- to C-terminus: Glycerol-3-phosphate acyltransferase (196 aa).

6 consecutive transmembrane segments (helical) span residues 5–25 (VYLL…IIFC), 53–73 (FSAL…VLLA), 80–100 (PSEI…PLFF), 107–127 (GVAT…AAGL), 130–150 (WLIV…TALI), and 153–173 (FYIW…CCLL).

Belongs to the PlsY family. In terms of assembly, probably interacts with PlsX.

The protein resides in the cell inner membrane. The enzyme catalyses an acyl phosphate + sn-glycerol 3-phosphate = a 1-acyl-sn-glycero-3-phosphate + phosphate. The protein operates within lipid metabolism; phospholipid metabolism. Functionally, catalyzes the transfer of an acyl group from acyl-phosphate (acyl-PO(4)) to glycerol-3-phosphate (G3P) to form lysophosphatidic acid (LPA). This enzyme utilizes acyl-phosphate as fatty acyl donor, but not acyl-CoA or acyl-ACP. The protein is Glycerol-3-phosphate acyltransferase of Actinobacillus pleuropneumoniae serotype 7 (strain AP76).